Reading from the N-terminus, the 202-residue chain is Glycerol-3-phosphate acyltransferase (202 aa).

5 helical membrane passes run 6 to 26, 56 to 76, 82 to 102, 118 to 138, and 141 to 161; these read LTLGMILSAYLAGSISSAVLV, SAALVLFFDMLKGALPAYIAF, SVSLGIIAIAACLGHIFPIFF, APIGPELALLLMGSWVLMVLI, and YSSLAAIVTALLAPFYTWYLD.

It belongs to the PlsY family. As to quaternary structure, probably interacts with PlsX.

The protein resides in the cell inner membrane. The catalysed reaction is an acyl phosphate + sn-glycerol 3-phosphate = a 1-acyl-sn-glycero-3-phosphate + phosphate. Its pathway is lipid metabolism; phospholipid metabolism. Its function is as follows. Catalyzes the transfer of an acyl group from acyl-phosphate (acyl-PO(4)) to glycerol-3-phosphate (G3P) to form lysophosphatidic acid (LPA). This enzyme utilizes acyl-phosphate as fatty acyl donor, but not acyl-CoA or acyl-ACP. This Shewanella woodyi (strain ATCC 51908 / MS32) protein is Glycerol-3-phosphate acyltransferase.